The sequence spans 424 residues: Serine--tRNA ligase (424 aa).

228–230 (TAE) contributes to the L-serine binding site. 259–261 (RSE) is a binding site for ATP. E282 is an L-serine binding site. 346–349 (EISS) contacts ATP. S382 lines the L-serine pocket.

The protein belongs to the class-II aminoacyl-tRNA synthetase family. Type-1 seryl-tRNA synthetase subfamily. Homodimer. The tRNA molecule binds across the dimer.

The protein localises to the cytoplasm. The catalysed reaction is tRNA(Ser) + L-serine + ATP = L-seryl-tRNA(Ser) + AMP + diphosphate + H(+). It catalyses the reaction tRNA(Sec) + L-serine + ATP = L-seryl-tRNA(Sec) + AMP + diphosphate + H(+). Its pathway is aminoacyl-tRNA biosynthesis; selenocysteinyl-tRNA(Sec) biosynthesis; L-seryl-tRNA(Sec) from L-serine and tRNA(Sec): step 1/1. In terms of biological role, catalyzes the attachment of serine to tRNA(Ser). Is also able to aminoacylate tRNA(Sec) with serine, to form the misacylated tRNA L-seryl-tRNA(Sec), which will be further converted into selenocysteinyl-tRNA(Sec). This chain is Serine--tRNA ligase, found in Rhodospirillum centenum (strain ATCC 51521 / SW).